We begin with the raw amino-acid sequence, 201 residues long: Cytochrome c4 (201 aa).

The N-terminal stretch at 1 to 20 (MNKLLVSLLLTLGLTGLAHA) is a signal peptide. Heme c-binding residues include C34, C37, H38, M77, C130, C133, H134, and M178.

Post-translationally, binds 2 heme c groups covalently per subunit.

It localises to the periplasm. Diheme, high potential cytochrome c believed to be an intermediate electron donor to terminal oxidation systems. In Pseudomonas aeruginosa (strain ATCC 15692 / DSM 22644 / CIP 104116 / JCM 14847 / LMG 12228 / 1C / PRS 101 / PAO1), this protein is Cytochrome c4 (cc4).